Here is a 903-residue protein sequence, read N- to C-terminus: Protein translocase subunit SecA (903 aa).

ATP is bound by residues Gln89, 107-111 (GEGKT), and Asp502. Zn(2+) contacts are provided by Cys886, Cys888, Cys897, and His898.

It belongs to the SecA family. As to quaternary structure, monomer and homodimer. Part of the essential Sec protein translocation apparatus which comprises SecA, SecYEG and auxiliary proteins SecDF-YajC and YidC. The cofactor is Zn(2+).

It localises to the cell inner membrane. It is found in the cytoplasm. It catalyses the reaction ATP + H2O + cellular proteinSide 1 = ADP + phosphate + cellular proteinSide 2.. Part of the Sec protein translocase complex. Interacts with the SecYEG preprotein conducting channel. Has a central role in coupling the hydrolysis of ATP to the transfer of proteins into and across the cell membrane, serving both as a receptor for the preprotein-SecB complex and as an ATP-driven molecular motor driving the stepwise translocation of polypeptide chains across the membrane. The protein is Protein translocase subunit SecA of Rhizobium meliloti (strain 1021) (Ensifer meliloti).